The primary structure comprises 434 residues: Eukaryotic translation initiation factor 3 subunit E (434 aa).

Positions 219–392 (FFNHPKGRDL…GHVVMGTQPL (174 aa)) constitute a PCI domain.

This sequence belongs to the eIF-3 subunit E family. Component of the eukaryotic translation initiation factor 3 (eIF-3) complex. The eIF-3 complex interacts with pix. Interacts with mxt.

The protein resides in the cytoplasm. Component of the eukaryotic translation initiation factor 3 (eIF-3) complex, which is involved in protein synthesis of a specialized repertoire of mRNAs and, together with other initiation factors, stimulates binding of mRNA and methionyl-tRNAi to the 40S ribosome. The eIF-3 complex specifically targets and initiates translation of a subset of mRNAs involved in cell proliferation. This Drosophila pseudoobscura pseudoobscura (Fruit fly) protein is Eukaryotic translation initiation factor 3 subunit E (eIF3-S6).